We begin with the raw amino-acid sequence, 248 residues long: PF03932 family protein CutC (248 aa).

It belongs to the CutC family. As to quaternary structure, homodimer.

The protein localises to the cytoplasm. This chain is PF03932 family protein CutC, found in Salmonella enteritidis PT4 (strain P125109).